A 428-amino-acid polypeptide reads, in one-letter code: MANVTVVGAQWGDEGKGKIVDWLSNRADVVVRFQGGHNAGHTLVVDGKVYKLALLPSGVVQGKLSVIGNGVVVDPWHLLSEIDKIADQGVAITPDLLILADNACLILPLHRDLDQAREAASTQKIGTTGRGIGPAYEDKVGRRAIRVADLADPEALKPKIERLLAHHGALRRGLGLPEANAQELFDALMELAPRILSYAQPAWRVLDQAYKAGRRILFEGAQGSLLDVDHGTYPFVTSSNTAAGQASAGSGMGPSATGFVLGIVKAYTTRVGEGPFPAELFDEVGKHLSTVGREVGVNTGRARRCGWFDSVLVRQSVAINGIHGVALTKLDVLDGLKTLKICVGYKIGDKVVDYLPAGLRDQAAATPVYEEIEGWTESTAGARSFKDLNANAIKYVRRVEELIGAPVALLSTSPERDDTILMRDPFQG.

Residues 12–18 (GDEGKGK) and 40–42 (GHT) contribute to the GTP site. Catalysis depends on Asp-13, which acts as the Proton acceptor. The Mg(2+) site is built by Asp-13 and Gly-40. Residues 13–16 (DEGK), 38–41 (NAGH), Thr-128, Arg-142, Gln-222, Thr-237, and Arg-301 each bind IMP. His-41 (proton donor) is an active-site residue. Residue 297 to 303 (VNTGRAR) coordinates substrate. GTP is bound by residues Arg-303, 329 to 331 (KLD), and 411 to 413 (STS).

It belongs to the adenylosuccinate synthetase family. Homodimer. The cofactor is Mg(2+).

The protein resides in the cytoplasm. The catalysed reaction is IMP + L-aspartate + GTP = N(6)-(1,2-dicarboxyethyl)-AMP + GDP + phosphate + 2 H(+). It functions in the pathway purine metabolism; AMP biosynthesis via de novo pathway; AMP from IMP: step 1/2. Functionally, plays an important role in the de novo pathway of purine nucleotide biosynthesis. Catalyzes the first committed step in the biosynthesis of AMP from IMP. The protein is Adenylosuccinate synthetase of Caulobacter vibrioides (strain ATCC 19089 / CIP 103742 / CB 15) (Caulobacter crescentus).